A 347-amino-acid chain; its full sequence is Photosystem II assembly protein Ycf48 (347 aa).

Positions 1 to 38 are cleaved as a signal peptide; the sequence is MFAKQIDIHWQKMKGIKFLHWLLGTVLLWVSLSTPALA. The Arg-rich patch signature appears at 202 to 226; it reads RGSFYSTWEPGQTAWEPHNRTTSRR.

The protein belongs to the Ycf48 family. In terms of assembly, interacts with the D1 protein (crystallized with PsbA1 or PsbA3), via the latter's C-terminal prepropeptide, may interact with parts of the mature D1 protein as well.

It localises to the cellular thylakoid lumen. Functionally, a factor required for optimal assembly of photosystem II (PSII), acting in the early stages of PSII assembly. Also plays a role in replacement of photodamaged D1 (psbA). Assists YidC in synthesis of chlorophyll-binding proteins. The polypeptide is Photosystem II assembly protein Ycf48 (Thermosynechococcus vestitus (strain NIES-2133 / IAM M-273 / BP-1)).